The following is a 235-amino-acid chain: STARD3 N-terminal-like protein (235 aa).

Met-1 carries the N-acetylmethionine modification. Residues 1-20 form a disordered region; it reads MNHLPEHMENTLTGSQSSHA. Residues 1-53 lie on the Cytoplasmic side of the membrane; it reads MNHLPEHMENTLTGSQSSHASLRDIHSINPAQLMARIESYEGREKKGISDVRR. Residues 10 to 20 are compositionally biased toward polar residues; that stretch reads NTLTGSQSSHA. A phosphoserine mark is found at Ser-15, Ser-21, and Ser-27. The 171-residue stretch at 48–218 folds into the MENTAL domain; it reads ISDVRRTFCL…YSPPESEAGS (171 aa). A helical membrane pass occupies residues 54–74; that stretch reads TFCLFVTFDLLFVTLLWIIEL. Residues 75 to 97 are Extracellular-facing; that stretch reads NVNGGIENTLKKEVIHYDYYSSY. A helical transmembrane segment spans residues 98-118; the sequence is FDIFLLAVFRFKVLILGYAVC. Over 119 to 122 the chain is Cytoplasmic; it reads RLRH. Residues 123 to 143 traverse the membrane as a helical segment; sequence WWAIALTTAVTSAFLLAKVIL. Topologically, residues 144–150 are extracellular; it reads SKLFSQG. The chain crosses the membrane as a helical span at residues 151–171; that stretch reads AFGYVLPIISFILAWIETWFL. At 172–235 the chain is on the cytoplasmic side; it reads DFKVLPQEAE…QESEKPLLEL (64 aa). Position 193 is a phosphoserine (Ser-193). Residues 202–235 form a disordered region; that stretch reads GLSDGQFYSPPESEAGSEEEAEEKQESEKPLLEL. Residues 208 to 213 carry the FFAT motif; the sequence is FYSPPE. Over residues 225 to 235 the composition is skewed to basic and acidic residues; it reads KQESEKPLLEL.

It belongs to the STARD3 family. In terms of assembly, homodimer. Interacts (via the MENTAL domain) with STARD3NL. Interacts (via FFAT motif) with VAPA. Interacts (via FFAT motif) with VAPB. Interacts (via FFAT motif) with MOSPD2 (via MSP domain).

The protein localises to the late endosome membrane. Its function is as follows. Tethering protein that creates contact site between the endoplasmic reticulum and late endosomes: localizes to late endosome membranes and contacts the endoplasmic reticulum via interaction with VAPA and VAPB. In Mus musculus (Mouse), this protein is STARD3 N-terminal-like protein.